Here is a 548-residue protein sequence, read N- to C-terminus: Glucose-6-phosphate isomerase (548 aa).

The active-site Proton donor is the glutamate 355. Active-site residues include histidine 386 and lysine 514.

Belongs to the GPI family.

Its subcellular location is the cytoplasm. The enzyme catalyses alpha-D-glucose 6-phosphate = beta-D-fructose 6-phosphate. It functions in the pathway carbohydrate biosynthesis; gluconeogenesis. It participates in carbohydrate degradation; glycolysis; D-glyceraldehyde 3-phosphate and glycerone phosphate from D-glucose: step 2/4. Functionally, catalyzes the reversible isomerization of glucose-6-phosphate to fructose-6-phosphate. This Yersinia pestis (strain Pestoides F) protein is Glucose-6-phosphate isomerase.